The sequence spans 1788 residues: Protein TIC 214 (1788 aa).

The next 6 helical transmembrane spans lie at 25 to 45 (IINS…FSIG), 70 to 90 (IGFI…PLHL), 95 to 115 (PHTI…WNNH), 132 to 152 (LNIQ…HFIL), 180 to 200 (VGWL…LFWI), and 223 to 243 (IFSI…PSPL). Disordered regions lie at residues 248-297 (LKKT…EEKE) and 1482-1526 (DLEN…DFDR). Basic and acidic residues-rich tracts occupy residues 253–277 (KREE…EKGT) and 1513–1526 (PLKK…DFDR).

It belongs to the TIC214 family. In terms of assembly, part of the Tic complex.

Its subcellular location is the plastid. The protein resides in the chloroplast inner membrane. Involved in protein precursor import into chloroplasts. May be part of an intermediate translocation complex acting as a protein-conducting channel at the inner envelope. The sequence is that of Protein TIC 214 from Ranunculus macranthus (Large buttercup).